Reading from the N-terminus, the 335-residue chain is Phosphate acyltransferase (335 aa).

Belongs to the PlsX family. In terms of assembly, homodimer. Probably interacts with PlsY.

Its subcellular location is the cytoplasm. It carries out the reaction a fatty acyl-[ACP] + phosphate = an acyl phosphate + holo-[ACP]. It participates in lipid metabolism; phospholipid metabolism. Functionally, catalyzes the reversible formation of acyl-phosphate (acyl-PO(4)) from acyl-[acyl-carrier-protein] (acyl-ACP). This enzyme utilizes acyl-ACP as fatty acyl donor, but not acyl-CoA. This Streptococcus suis (strain 98HAH33) protein is Phosphate acyltransferase.